Here is a 302-residue protein sequence, read N- to C-terminus: Protein FdhE homolog (302 aa).

It belongs to the FdhE family.

The protein localises to the cytoplasm. In terms of biological role, necessary for formate dehydrogenase activity. This is Protein FdhE homolog from Shewanella sp. (strain MR-4).